The sequence spans 137 residues: Large ribosomal subunit protein uL16 (137 aa).

It belongs to the universal ribosomal protein uL16 family. Part of the 50S ribosomal subunit.

Functionally, binds 23S rRNA and is also seen to make contacts with the A and possibly P site tRNAs. The protein is Large ribosomal subunit protein uL16 of Pseudomonas fluorescens (strain Pf0-1).